The sequence spans 462 residues: MVSPRKGKRIRMLKKNDIIQVAISDLSHEGAGVAKHDGFVFFVDNALPEEVIDMRVLKVNKNSGFGKVEAYHYLSPARNADVNLTYLRTGIADLGHLTYEDQLTFKKKQVQDSLYKIAGISDVTVESTIGMTEPLAYRNKAQVPVRRVNGQLETGFFRKHSHDLIPISDYYIQDKEIDRLINFTRDLLRRFDIKPYDETEQTGLLRNIVVRRGHYSGEMMVVLVTTRPKVFRVDQVIEKIVEAFPAVVSIIQNINDENTNAIFGKDFKTLYGKDTITDSMLGNNYAISAQSFYQVNTVMAEKLYQTAIAFSDLSKDDIVIDAYSGIGTIGLSFAKTVKAVYGVEVIEAAVRDAQQNAALNGITNAYFVADTAEHAMATWAKDGIKPSVILVDPPRKGLTESFIQASVAMGPQKITYVSCNPATMARDIKRYQELGYKLAKVQPVDLFPQTHHVECVVLLIKE.

Residues methionine 12–alanine 70 enclose the TRAM domain. 4 residues coordinate S-adenosyl-L-methionine: glutamine 294, tyrosine 323, glutamate 344, and aspartate 392. Catalysis depends on cysteine 419, which acts as the Nucleophile.

This sequence belongs to the class I-like SAM-binding methyltransferase superfamily. RNA M5U methyltransferase family.

This is an uncharacterized protein from Streptococcus pyogenes serotype M18 (strain MGAS8232).